A 128-amino-acid polypeptide reads, in one-letter code: Small nuclear ribonucleoprotein SmD3a (128 aa).

A Sm domain is found at 7–79; that stretch reads IPVKLLHESS…VRFLVIPDML (73 aa). Positions 90-128 are disordered; that stretch reads GKGKSASLGVGRGRGAAMRAKGTGRGTGGGRGAVPPVRR. Positions 112-121 are enriched in gly residues; sequence TGRGTGGGRG.

It belongs to the snRNP core protein family. Expressed in young seedlings, roots, leaves, flowers and immature siliques.

Its subcellular location is the cytoplasm. It localises to the cytosol. The protein localises to the nucleus. In terms of biological role, core component of the spliceosomal U1, U2, U4 and U5 small nuclear ribonucleoproteins (snRNPs), the building blocks of the spliceosome. May play a minor role in the splicing of cellular pre-mRNAs. This Arabidopsis thaliana (Mouse-ear cress) protein is Small nuclear ribonucleoprotein SmD3a.